Here is a 434-residue protein sequence, read N- to C-terminus: Polyadenylate-binding protein RBP47C' (434 aa).

The disordered stretch occupies residues 1-50 (MADVKVQSESESSDSHPLVDYQSLPPYPPPHPPVEVEENQPKTSPTPPPP). 3 consecutive RRM domains span residues 103–185 (KTIW…WASF), 199–278 (LSIF…PATP), and 306–378 (TTIF…WGRN).

Belongs to the polyadenylate-binding RBP47 family. In terms of assembly, interacts with the poly(A) tail of mRNA in nucleus.

It is found in the nucleus. It localises to the cytoplasmic granule. Functionally, heterogeneous nuclear ribonucleoprotein (hnRNP)-protein binding the poly(A) tail of mRNA and probably involved in some steps of pre-mRNA maturation. The protein is Polyadenylate-binding protein RBP47C' (RBP47C') of Arabidopsis thaliana (Mouse-ear cress).